The sequence spans 96 residues: UPF0251 protein Spea_3639 (96 aa).

It belongs to the UPF0251 family.

This chain is UPF0251 protein Spea_3639, found in Shewanella pealeana (strain ATCC 700345 / ANG-SQ1).